The following is a 364-amino-acid chain: Chorismate synthase (364 aa).

Arg-48 is a binding site for NADP(+). FMN contacts are provided by residues Arg-126–Ser-128, Gly-288, Lys-303–Ser-307, and Arg-329.

The protein belongs to the chorismate synthase family. In terms of assembly, homotetramer. FMNH2 serves as cofactor.

The catalysed reaction is 5-O-(1-carboxyvinyl)-3-phosphoshikimate = chorismate + phosphate. It participates in metabolic intermediate biosynthesis; chorismate biosynthesis; chorismate from D-erythrose 4-phosphate and phosphoenolpyruvate: step 7/7. Functionally, catalyzes the anti-1,4-elimination of the C-3 phosphate and the C-6 proR hydrogen from 5-enolpyruvylshikimate-3-phosphate (EPSP) to yield chorismate, which is the branch point compound that serves as the starting substrate for the three terminal pathways of aromatic amino acid biosynthesis. This reaction introduces a second double bond into the aromatic ring system. This chain is Chorismate synthase, found in Desulfovibrio desulfuricans (strain ATCC 27774 / DSM 6949 / MB).